The following is a 702-amino-acid chain: Elongation factor G (702 aa).

The tr-type G domain maps to 8 to 290 (ERYRNIGISA…GVVEYLPSPV (283 aa)). GTP is bound by residues 17 to 24 (AHIDAGKT), 88 to 92 (DTPGH), and 142 to 145 (NKMD).

Belongs to the TRAFAC class translation factor GTPase superfamily. Classic translation factor GTPase family. EF-G/EF-2 subfamily.

It localises to the cytoplasm. Functionally, catalyzes the GTP-dependent ribosomal translocation step during translation elongation. During this step, the ribosome changes from the pre-translocational (PRE) to the post-translocational (POST) state as the newly formed A-site-bound peptidyl-tRNA and P-site-bound deacylated tRNA move to the P and E sites, respectively. Catalyzes the coordinated movement of the two tRNA molecules, the mRNA and conformational changes in the ribosome. This Janthinobacterium sp. (strain Marseille) (Minibacterium massiliensis) protein is Elongation factor G.